The chain runs to 212 residues: MKGLIGRKIGMTRIFTDEGISIPITIIQVEPNIITQVKSIQTDGYYAYQVTTGTKKPNLVIKPEAGHFAKAGTKAGRSLWEFRLKHEEKPINIGEILTLEYFTNIKKVDITGTSKGKGFSGTVKRWNFHMQDASHGNSLSHRVTGSIGQNQTPGKVFKGKKMAGHMGNKRVTIQNLDIIRIDLRKNLLLIKGAIPGAPGNDLIIKPAIKLSH.

Polar residues predominate over residues 139-153 (LSHRVTGSIGQNQTP). The interval 139–161 (LSHRVTGSIGQNQTPGKVFKGKK) is disordered. Glutamine 151 bears the N5-methylglutamine mark.

Belongs to the universal ribosomal protein uL3 family. As to quaternary structure, part of the 50S ribosomal subunit. Forms a cluster with proteins L14 and L19. Post-translationally, methylated by PrmB.

Functionally, one of the primary rRNA binding proteins, it binds directly near the 3'-end of the 23S rRNA, where it nucleates assembly of the 50S subunit. The protein is Large ribosomal subunit protein uL3 of Baumannia cicadellinicola subsp. Homalodisca coagulata.